We begin with the raw amino-acid sequence, 101 residues long: Ubiquitin-related modifier 1 homolog (101 aa).

Glycine 101 is modified (1-thioglycine). Glycine 101 participates in a covalent cross-link: Glycyl lysine isopeptide (Gly-Lys) (interchain with K-? in acceptor proteins).

This sequence belongs to the URM1 family. Interacts with cer. In terms of processing, C-terminal thiocarboxylation occurs in 2 steps, it is first acyl-adenylated (-COAMP) via the hesA/moeB/thiF part of the MOCS3 homolog, then thiocarboxylated (-COSH) via the rhodanese domain of the MOCS3 homolog.

The protein localises to the cytoplasm. It participates in tRNA modification; 5-methoxycarbonylmethyl-2-thiouridine-tRNA biosynthesis. Its function is as follows. Acts as a sulfur carrier required for 2-thiolation of mcm(5)S(2)U at tRNA wobble positions of cytosolic tRNA(Lys), tRNA(Glu) and tRNA(Gln). Serves as sulfur donor in tRNA 2-thiolation reaction by being thiocarboxylated (-COSH) at its C-terminus by MOCS3. The sulfur is then transferred to tRNA to form 2-thiolation of mcm(5)S(2)U. Also acts as a ubiquitin-like protein (UBL) that is covalently conjugated via an isopeptide bond to lysine residues of target proteins such as Prx2/Jafrac1, Ciao1, Eip71CD and GILT1. The thiocarboxylated form serves as substrate for conjugation and oxidative stress specifically induces the formation of UBL-protein conjugates. The sequence is that of Ubiquitin-related modifier 1 homolog from Drosophila yakuba (Fruit fly).